The chain runs to 702 residues: Cadmium, zinc and cobalt-transporting ATPase (702 aa).

At 1 to 86 the chain is on the cytoplasmic side; the sequence is MRLVKQEYVL…HIKKSADDGY (86 aa). One can recognise an HMA domain in the interval 4–72; it reads VKQEYVLDGL…KVKSIDPHVT (69 aa). 2 residues coordinate Cd(2+): cysteine 15 and cysteine 18. Cysteine 15 and cysteine 18 together coordinate Co(2+). 2 residues coordinate Zn(2+): cysteine 15 and cysteine 18. Residues 87 to 107 traverse the membrane as a helical segment; the sequence is RNRMVNMLIRMAAAVILGAAA. The Extracellular portion of the chain corresponds to 108–116; it reads YLVQSGTIE. A helical transmembrane segment spans residues 117–136; sequence FFLFLGAYLIIGGDIIIRAV. Residues 137–143 lie on the Cytoplasmic side of the membrane; sequence KNIIRGQ. A helical membrane pass occupies residues 144–163; sequence VFDEHFLMALATIGAFLIQQ. At 164–166 the chain is on the extracellular side; it reads YPE. A helical membrane pass occupies residues 167 to 186; the sequence is GVAVMLFYQIGELFQGAAVS. Over 187–320 the chain is Cytoplasmic; the sequence is RSRKSISALM…ITKFAKYYTP (134 aa). A helical membrane pass occupies residues 321–339; that stretch reads AVVIIAVLLAFVPPLVLSG. Topologically, residues 340–345 are extracellular; the sequence is AALSDW. A helical membrane pass occupies residues 346–363; that stretch reads VYRALIFLVISCPCALVV. Residues 364 to 648 lie on the Cytoplasmic side of the membrane; it reads SIPLGFFGGI…AIRIAKRTRR (285 aa). Catalysis depends on aspartate 401, which acts as the 4-aspartylphosphate intermediate. 2 residues coordinate Mg(2+): aspartate 595 and aspartate 599. A helical membrane pass occupies residues 649-670; sequence IVWQNIGFALGVKAIFLILGAF. Residues 671–678 lie on the Extracellular side of the membrane; it reads GIATMWEA. Residues 679–694 traverse the membrane as a helical segment; the sequence is VFSDVGVTLLAVANAM. At 695 to 702 the chain is on the cytoplasmic side; sequence RVMRLKNK.

Belongs to the cation transport ATPase (P-type) (TC 3.A.3) family. Type IB subfamily.

It localises to the cell membrane. It catalyses the reaction Zn(2+)(in) + ATP + H2O = Zn(2+)(out) + ADP + phosphate + H(+). The catalysed reaction is Cd(2+)(in) + ATP + H2O = Cd(2+)(out) + ADP + phosphate + H(+). Functionally, couples the hydrolysis of ATP with the transport of cadmium, zinc and cobalt out of the cell. Does not seem to transport copper. This chain is Cadmium, zinc and cobalt-transporting ATPase (cadA), found in Bacillus subtilis (strain 168).